Reading from the N-terminus, the 993-residue chain is Glycine dehydrogenase (decarboxylating) (993 aa).

At Lys715 the chain carries N6-(pyridoxal phosphate)lysine.

It belongs to the GcvP family. In terms of assembly, the glycine cleavage system is composed of four proteins: P, T, L and H. Requires pyridoxal 5'-phosphate as cofactor.

It carries out the reaction N(6)-[(R)-lipoyl]-L-lysyl-[glycine-cleavage complex H protein] + glycine + H(+) = N(6)-[(R)-S(8)-aminomethyldihydrolipoyl]-L-lysyl-[glycine-cleavage complex H protein] + CO2. The glycine cleavage system catalyzes the degradation of glycine. The P protein binds the alpha-amino group of glycine through its pyridoxal phosphate cofactor; CO(2) is released and the remaining methylamine moiety is then transferred to the lipoamide cofactor of the H protein. This Xylella fastidiosa (strain Temecula1 / ATCC 700964) protein is Glycine dehydrogenase (decarboxylating).